The chain runs to 241 residues: MKFILLWALLNLTVALAFNPDYTVSSTPPYLVYLKSDYLPCAGVLIHPLWVITAAHCNLPKLRVILGVTIPADSNEKHLQVIGYEKMIHHPHFSVTSIDHDIMLIKLKTEAELNDYVKLANLPYQTISENTMCSVSTWSYNVCDIYKEPDSLQTVNISVISKPQCRDAYKTYNITENMLCVGIVPGRRQPCKEVSAAPAICNGMLQGILSFADGCVLRADVGIYAKIFYYIPWIENVIQNN.

A signal peptide spans 1–17 (MKFILLWALLNLTVALA). Residues 18 to 239 (FNPDYTVSST…YIPWIENVIQ (222 aa)) enclose the Peptidase S1 domain. A disulfide bridge links cysteine 41 with cysteine 57. Catalysis depends on charge relay system residues histidine 56 and aspartate 101. 3 cysteine pairs are disulfide-bonded: cysteine 133–cysteine 201, cysteine 165–cysteine 180, and cysteine 191–cysteine 215. Asparagine 156 and asparagine 173 each carry an N-linked (GlcNAc...) asparagine glycan. The active-site Charge relay system is the serine 195.

The protein belongs to the peptidase S1 family.

The protein localises to the secreted. The catalysed reaction is Preferential cleavage: Arg-|-Xaa, Lys-|-Xaa.. The protein is Serine protease 58 (PRSS58) of Homo sapiens (Human).